The following is a 302-amino-acid chain: Ribosomal RNA small subunit methyltransferase H (302 aa).

S-adenosyl-L-methionine contacts are provided by residues 36 to 38 (GGH), aspartate 56, phenylalanine 84, aspartate 99, and glutamine 106.

Belongs to the methyltransferase superfamily. RsmH family.

It is found in the cytoplasm. The enzyme catalyses cytidine(1402) in 16S rRNA + S-adenosyl-L-methionine = N(4)-methylcytidine(1402) in 16S rRNA + S-adenosyl-L-homocysteine + H(+). Specifically methylates the N4 position of cytidine in position 1402 (C1402) of 16S rRNA. The polypeptide is Ribosomal RNA small subunit methyltransferase H (Christiangramia forsetii (strain DSM 17595 / CGMCC 1.15422 / KT0803) (Gramella forsetii)).